Consider the following 522-residue polypeptide: Peptide methionine sulfoxide reductase MsrA/MsrB (522 aa).

Residues Leu-17–Ala-174 form the Thioredoxin domain. Cys-68 and Cys-71 are oxidised to a cystine. Residues Arg-199 to Arg-354 form a peptide methionine sulfoxide reductase A region. The active site involves Cys-207. A MsrB domain is found at Asp-383–Leu-506. Residues Cys-440 and Cys-495 are joined by a disulfide bond. Cys-495 acts as the Nucleophile in catalysis.

This sequence in the N-terminal section; belongs to the thioredoxin family. It in the central section; belongs to the MsrA Met sulfoxide reductase family. The protein in the C-terminal section; belongs to the MsrB Met sulfoxide reductase family.

It catalyses the reaction L-methionyl-[protein] + [thioredoxin]-disulfide + H2O = L-methionyl-(S)-S-oxide-[protein] + [thioredoxin]-dithiol. The catalysed reaction is [thioredoxin]-disulfide + L-methionine + H2O = L-methionine (S)-S-oxide + [thioredoxin]-dithiol. The enzyme catalyses L-methionyl-[protein] + [thioredoxin]-disulfide + H2O = L-methionyl-(R)-S-oxide-[protein] + [thioredoxin]-dithiol. Its function is as follows. Has an important function as a repair enzyme for proteins that have been inactivated by oxidation. Catalyzes the reversible oxidation-reduction of methionine sulfoxide in proteins to methionine. The sequence is that of Peptide methionine sulfoxide reductase MsrA/MsrB (msrAB) from Neisseria meningitidis serogroup A / serotype 4A (strain DSM 15465 / Z2491).